The chain runs to 303 residues: Kynurenine formamidase (303 aa).

Residues 95-99 (HGGYW) carry the HGGXW motif. The active-site Nucleophile is serine 164. Catalysis depends on residues aspartate 247 and histidine 279.

It belongs to the kynurenine formamidase family. In terms of assembly, homodimer.

It localises to the cytoplasm. The protein resides in the cytosol. Its subcellular location is the nucleus. It carries out the reaction N-formyl-L-kynurenine + H2O = L-kynurenine + formate + H(+). It participates in amino-acid degradation; L-tryptophan degradation via kynurenine pathway; L-kynurenine from L-tryptophan: step 2/2. Its function is as follows. Catalyzes the hydrolysis of N-formyl-L-kynurenine to L-kynurenine, the second step in the kynurenine pathway of tryptophan degradation. Kynurenine may be further oxidized to nicotinic acid, NAD(H) and NADP(H). Required for elimination of toxic metabolites. This Homo sapiens (Human) protein is Kynurenine formamidase.